Reading from the N-terminus, the 591-residue chain is V-type ATP synthase alpha chain (591 aa).

Residue 233 to 240 participates in ATP binding; it reads GPFGAGKT.

It belongs to the ATPase alpha/beta chains family.

The enzyme catalyses ATP + H2O + 4 H(+)(in) = ADP + phosphate + 5 H(+)(out). In terms of biological role, produces ATP from ADP in the presence of a proton gradient across the membrane. The V-type alpha chain is a catalytic subunit. The chain is V-type ATP synthase alpha chain from Streptococcus pyogenes serotype M1.